A 294-amino-acid polypeptide reads, in one-letter code: Maltose/maltodextrin import ATP-binding protein MalK (294 aa).

Residues valine 4–isoleucine 233 enclose the ABC transporter domain. An ATP-binding site is contributed by glycine 36–serine 43.

This sequence belongs to the ABC transporter superfamily. Maltooligosaccharide importer (TC 3.A.1.1.1) family. As to quaternary structure, the complex is composed of two ATP-binding proteins (MalK), two transmembrane proteins (MalG and MalK) and a solute-binding protein (MalE).

It localises to the cell inner membrane. It catalyses the reaction D-maltose(out) + ATP + H2O = D-maltose(in) + ADP + phosphate + H(+). Part of the ABC transporter complex MalEFGK involved in maltose/maltodextrin import. Responsible for energy coupling to the transport system. The sequence is that of Maltose/maltodextrin import ATP-binding protein MalK from Klebsiella aerogenes (Enterobacter aerogenes).